The following is a 769-amino-acid chain: Multiple RNA-binding domain-containing protein 1 (769 aa).

An RRM 1 domain is found at 24–102 (SRLIFLNLPS…GKVKVDFVKD (79 aa)). 2 disordered regions span residues 105-139 (LKTG…NKRL) and 151-191 (PAMA…DDDA). The segment covering 165–178 (GTKKEKSVKGKEKS) has biased composition (basic and acidic residues). The segment covering 179 to 191 (EEPEEAEADDDDA) has biased composition (acidic residues). 3 RRM domains span residues 221–299 (SRLF…PGRA), 417–489 (TTIL…KGPV), and 535–618 (STLF…FAQR). The tract at residues 617–637 (QRGAEDDRETKKGGDAEGGKT) is disordered. Positions 619–636 (GAEDDRETKKGGDAEGGK) are enriched in basic and acidic residues. An RRM 5 domain is found at 640-723 (TKVLVKNLPF…RHLVLQWANE (84 aa)). A disordered region spans residues 740–769 (VRGMEDGGDRKRRKLDFKGGKEDEMDGLEV).

Belongs to the RRM MRD1 family.

It is found in the nucleus. Functionally, involved in pre-rRNA processing. The chain is Multiple RNA-binding domain-containing protein 1 (MRD1) from Cryptococcus neoformans var. neoformans serotype D (strain B-3501A) (Filobasidiella neoformans).